The following is a 114-amino-acid chain: Neurotrophic factor BDNF precursor form (114 aa).

Intrachain disulfides connect Cys-14–Cys-81, Cys-59–Cys-110, and Cys-69–Cys-112.

It belongs to the NGF-beta family. In terms of assembly, monomers and homodimers. Binds to NTRK2/TRKB. Can form heterodimers with other neurotrophin family members, such as NTF3 and NTF4 (in vitro), but the physiological relevance of this is not clear. BDNF precursor form: interacts with the heterodimer formed by NGFR and SORCS2. Mature BDNF has much lower affinity for the heterodimer formed by NGFR and SORCS2. N-glycosylated and glycosulfated, contrary to mature BDNF. In terms of processing, mature BDNF is produced by proteolytic removal of the propeptide, catalyzed by a FURIN family member. In addition, the precursor form is proteolytically cleaved within the propeptide, but this is not an obligatory intermediate for the production of mature BDNF. Can be converted into mature BDNF by plasmin (PLG).

The protein resides in the secreted. Important signaling molecule that activates signaling cascades downstream of NTRK2. During development, promotes the survival and differentiation of selected neuronal populations of the peripheral and central nervous systems. Participates in axonal growth, pathfinding and in the modulation of dendritic growth and morphology. Major regulator of synaptic transmission and plasticity at adult synapses in many regions of the CNS. The versatility of BDNF is emphasized by its contribution to a range of adaptive neuronal responses including long-term potentiation (LTP), long-term depression (LTD), certain forms of short-term synaptic plasticity, as well as homeostatic regulation of intrinsic neuronal excitability. Its function is as follows. Important signaling molecule that activates signaling cascades downstream of NTRK2. Activates signaling cascades via the heterodimeric receptor formed by NGFR and SORCS2. Signaling via NGFR and SORCS2 plays a role in synaptic plasticity and long-term depression (LTD). Binding to NGFR and SORCS2 promotes neuronal apoptosis. Promotes neuronal growth cone collapse. This Macaca mulatta (Rhesus macaque) protein is Neurotrophic factor BDNF precursor form (BDNF).